We begin with the raw amino-acid sequence, 419 residues long: UDP-N-acetylglucosamine 1-carboxyvinyltransferase (419 aa).

Position 22–23 (22–23) interacts with phosphoenolpyruvate; it reads KN. R91 contributes to the UDP-N-acetyl-alpha-D-glucosamine binding site. The Proton donor role is filled by C115. 2-(S-cysteinyl)pyruvic acid O-phosphothioketal is present on C115. UDP-N-acetyl-alpha-D-glucosamine is bound by residues 120 to 124, 160 to 163, D305, and V327; these read RPVDL and KVSV.

This sequence belongs to the EPSP synthase family. MurA subfamily.

Its subcellular location is the cytoplasm. It catalyses the reaction phosphoenolpyruvate + UDP-N-acetyl-alpha-D-glucosamine = UDP-N-acetyl-3-O-(1-carboxyvinyl)-alpha-D-glucosamine + phosphate. It participates in cell wall biogenesis; peptidoglycan biosynthesis. Its function is as follows. Cell wall formation. Adds enolpyruvyl to UDP-N-acetylglucosamine. In Salmonella schwarzengrund (strain CVM19633), this protein is UDP-N-acetylglucosamine 1-carboxyvinyltransferase.